Reading from the N-terminus, the 424-residue chain is MKIYMVGGAVRDKLLGLPVTDHDWVVVGATPEALTAQGFLPVGKDFPVFLHPQTREEYALARTERNSARGYRGFEVYAAPEVTLEQDLARRDLTINSIAAPAHPDSAKGLFEPDFDALVDPYGGQRDLQAKVLRHVTDAFREDPVRILRLARFAARFADFSIAPETLAMMWEMVTDGEVDGLVPERVWQELARGLMEDKPSRMFDALRACGALQHLLPEVERLWGVAQSAQYHPEIDTGIHLMMVLDMAAQLGAPLPVRFACLCHDLGKGTTPADVLPRHIGHEERSAKLLKDVCQRLRVPSECREIADVVAREHGNIHRSGEFSPAAVVRLLERCDAFRKPRRFADILLACECDARGRLGFEQTPYPQRPRLLQLLAAAQSVATDKVAAEAMAAGQSGPKIGEWIHQARVEAVRQSAAAAPAP.

The ATP site is built by Gly-8 and Arg-11. CTP-binding residues include Gly-8 and Arg-11. 2 residues coordinate Mg(2+): Asp-21 and Asp-23. Residues Arg-91, Arg-149, and Arg-152 each contribute to the ATP site. Arg-91, Arg-149, and Arg-152 together coordinate CTP. In terms of domain architecture, HD spans 238-339; sequence TGIHLMMVLD…VRLLERCDAF (102 aa).

It belongs to the tRNA nucleotidyltransferase/poly(A) polymerase family. Bacterial CCA-adding enzyme type 1 subfamily. In terms of assembly, monomer. Can also form homodimers and oligomers. Requires Mg(2+) as cofactor. Ni(2+) serves as cofactor.

It carries out the reaction a tRNA precursor + 2 CTP + ATP = a tRNA with a 3' CCA end + 3 diphosphate. The enzyme catalyses a tRNA with a 3' CCA end + 2 CTP + ATP = a tRNA with a 3' CCACCA end + 3 diphosphate. Catalyzes the addition and repair of the essential 3'-terminal CCA sequence in tRNAs without using a nucleic acid template. Adds these three nucleotides in the order of C, C, and A to the tRNA nucleotide-73, using CTP and ATP as substrates and producing inorganic pyrophosphate. tRNA 3'-terminal CCA addition is required both for tRNA processing and repair. Also involved in tRNA surveillance by mediating tandem CCA addition to generate a CCACCA at the 3' terminus of unstable tRNAs. While stable tRNAs receive only 3'-terminal CCA, unstable tRNAs are marked with CCACCA and rapidly degraded. The protein is Multifunctional CCA protein of Polaromonas naphthalenivorans (strain CJ2).